Reading from the N-terminus, the 434-residue chain is Lipoyl synthase, mitochondrial (434 aa).

The N-terminal 31 residues, 1–31 (MAASARGLRTLQSAHSSTTVPRLQLAVSRCY), are a transit peptide targeting the mitochondrion. Residues 34–54 (TTSPDPPITNSSNSSNSTPTP) are compositionally biased toward low complexity. Positions 34–55 (TTSPDPPITNSSNSSNSTPTPK) are disordered. 7 residues coordinate [4Fe-4S] cluster: Cys-144, Cys-149, Cys-155, Cys-175, Cys-179, Cys-182, and Ser-390. Residues 158–379 (GSSKSAATAT…KERALEMGFL (222 aa)) form the Radical SAM core domain.

The protein belongs to the radical SAM superfamily. Lipoyl synthase family. [4Fe-4S] cluster is required as a cofactor.

The protein localises to the mitochondrion. The catalysed reaction is [[Fe-S] cluster scaffold protein carrying a second [4Fe-4S](2+) cluster] + N(6)-octanoyl-L-lysyl-[protein] + 2 oxidized [2Fe-2S]-[ferredoxin] + 2 S-adenosyl-L-methionine + 4 H(+) = [[Fe-S] cluster scaffold protein] + N(6)-[(R)-dihydrolipoyl]-L-lysyl-[protein] + 4 Fe(3+) + 2 hydrogen sulfide + 2 5'-deoxyadenosine + 2 L-methionine + 2 reduced [2Fe-2S]-[ferredoxin]. It participates in protein modification; protein lipoylation via endogenous pathway; protein N(6)-(lipoyl)lysine from octanoyl-[acyl-carrier-protein]: step 2/2. In terms of biological role, catalyzes the radical-mediated insertion of two sulfur atoms into the C-6 and C-8 positions of the octanoyl moiety bound to the lipoyl domains of lipoate-dependent enzymes, thereby converting the octanoylated domains into lipoylated derivatives. The polypeptide is Lipoyl synthase, mitochondrial (Paracoccidioides brasiliensis (strain Pb03)).